The following is a 67-amino-acid chain: Probable Sec-independent protein translocase protein TatE (67 aa).

Residues 4 to 21 (ISITKLLVIAALVVLLFG) traverse the membrane as a helical segment. The tract at residues 44–67 (NDDDTGAKTPAASEAPAERLSHKE) is disordered.

Belongs to the TatA/E family. TatE subfamily.

Its subcellular location is the cell inner membrane. Its function is as follows. Part of the twin-arginine translocation (Tat) system that transports large folded proteins containing a characteristic twin-arginine motif in their signal peptide across membranes. TatE shares overlapping functions with TatA. The sequence is that of Probable Sec-independent protein translocase protein TatE from Cronobacter sakazakii (strain ATCC BAA-894) (Enterobacter sakazakii).